Here is a 127-residue protein sequence, read N- to C-terminus: MARIAGVDLPKRKRVEIGLTYIYGIGRSTSRQILNKLSIDYDTKVDQLTETEINAIRNAVTNEHKVEGELRTEVSMNIKRLMDLGCYRGLRHRKSLPCHGQRTSTNARTRKGPKRTAVKKKGAAKKK.

The interval 96 to 127 (LPCHGQRTSTNARTRKGPKRTAVKKKGAAKKK) is disordered. A compositionally biased stretch (basic residues) spans 108–127 (RTRKGPKRTAVKKKGAAKKK).

Belongs to the universal ribosomal protein uS13 family. As to quaternary structure, part of the 30S ribosomal subunit. Forms a loose heterodimer with protein S19. Forms two bridges to the 50S subunit in the 70S ribosome.

Functionally, located at the top of the head of the 30S subunit, it contacts several helices of the 16S rRNA. In the 70S ribosome it contacts the 23S rRNA (bridge B1a) and protein L5 of the 50S subunit (bridge B1b), connecting the 2 subunits; these bridges are implicated in subunit movement. Contacts the tRNAs in the A and P-sites. This is Small ribosomal subunit protein uS13 from Desulfosudis oleivorans (strain DSM 6200 / JCM 39069 / Hxd3) (Desulfococcus oleovorans).